A 459-amino-acid chain; its full sequence is Putrescine aminotransferase (459 aa).

Residues 150–151 and Gln274 contribute to the pyridoxal 5'-phosphate site; that span reads GT. Lys300 is modified (N6-(pyridoxal phosphate)lysine). Thr332 contributes to the pyridoxal 5'-phosphate binding site.

It belongs to the class-III pyridoxal-phosphate-dependent aminotransferase family. Putrescine aminotransferase subfamily. It depends on pyridoxal 5'-phosphate as a cofactor.

It carries out the reaction an alkane-alpha,omega-diamine + 2-oxoglutarate = an omega-aminoaldehyde + L-glutamate. The catalysed reaction is putrescine + 2-oxoglutarate = 1-pyrroline + L-glutamate + H2O. It catalyses the reaction cadaverine + 2-oxoglutarate = 5-aminopentanal + L-glutamate. Its pathway is amine and polyamine degradation; putrescine degradation; 4-aminobutanal from putrescine (transaminase route): step 1/1. Its function is as follows. Catalyzes the aminotransferase reaction from putrescine to 2-oxoglutarate, leading to glutamate and 4-aminobutanal, which spontaneously cyclizes to form 1-pyrroline. This is the first step in one of two pathways for putrescine degradation, where putrescine is converted into 4-aminobutanoate (gamma-aminobutyrate or GABA) via 4-aminobutanal. Also functions as a cadaverine transaminase in a a L-lysine degradation pathway to succinate that proceeds via cadaverine, glutarate and L-2-hydroxyglutarate. The chain is Putrescine aminotransferase from Escherichia coli (strain ATCC 8739 / DSM 1576 / NBRC 3972 / NCIMB 8545 / WDCM 00012 / Crooks).